Reading from the N-terminus, the 152-residue chain is Deoxyuridine 5'-triphosphate nucleotidohydrolase (152 aa).

Residues 71-73 (RSG), N84, 88-90 (LID), and M98 each bind substrate.

This sequence belongs to the dUTPase family. The cofactor is Mg(2+).

The enzyme catalyses dUTP + H2O = dUMP + diphosphate + H(+). Its pathway is pyrimidine metabolism; dUMP biosynthesis; dUMP from dCTP (dUTP route): step 2/2. In terms of biological role, this enzyme is involved in nucleotide metabolism: it produces dUMP, the immediate precursor of thymidine nucleotides and it decreases the intracellular concentration of dUTP so that uracil cannot be incorporated into DNA. This Shewanella baltica (strain OS155 / ATCC BAA-1091) protein is Deoxyuridine 5'-triphosphate nucleotidohydrolase.